Reading from the N-terminus, the 263-residue chain is MFDIGLNITSSQFDHDRDEMIARARAAGVSNMLFTGTSLEESEKACAFARRYEGCWSTAGVHPHDASTWNDESAARLRALAGEAQVVAIGECGLDFNRNFSTPAEQEHAFTEQLRLAAELALPVFLHCRDAHARFLALLDPWLDKLPGAVLHCFTGTEQEARETMARGLYLGITGWVCDERRGLELRALLPVIPADRLLLETDAPYLLPRDLAPRPKSRRNEPCWLPHILKQVAQWRGEDPAWLEATTDANAARLFLKNASPA.

3 residues coordinate a divalent metal cation: Glu91, His127, and His152.

This sequence belongs to the metallo-dependent hydrolases superfamily. TatD-type hydrolase family. TatD subfamily. Monomer. Mg(2+) serves as cofactor.

It is found in the cytoplasm. 3'-5' exonuclease that prefers single-stranded DNA and RNA. May play a role in the H(2)O(2)-induced DNA damage repair. The sequence is that of 3'-5' ssDNA/RNA exonuclease TatD from Cronobacter sakazakii (strain ATCC BAA-894) (Enterobacter sakazakii).